A 246-amino-acid chain; its full sequence is Mast cell protease 9 (246 aa).

An N-terminal signal peptide occupies residues Met1–Ala18. The propeptide at Glu19–Glu20 is activation peptide. The region spanning Ile21–Lys244 is the Peptidase S1 domain. Cysteines 50 and 66 form a disulfide. Active-site charge relay system residues include His65 and Asp109. 2 disulfide bridges follow: Cys143–Cys208 and Cys174–Cys187. Ser202 serves as the catalytic Charge relay system.

It belongs to the peptidase S1 family. Granzyme subfamily. Selectively expressed in uterine mast cells.

The sequence is that of Mast cell protease 9 (Mcpt9) from Mus musculus (Mouse).